We begin with the raw amino-acid sequence, 60 residues long: UPF0434 protein CKO_02153 (60 aa).

It belongs to the UPF0434 family.

This Citrobacter koseri (strain ATCC BAA-895 / CDC 4225-83 / SGSC4696) protein is UPF0434 protein CKO_02153.